The sequence spans 253 residues: 5'/3'-nucleotidase SurE (253 aa).

D8, D9, S39, and N92 together coordinate a divalent metal cation.

This sequence belongs to the SurE nucleotidase family. Requires a divalent metal cation as cofactor.

The protein resides in the cytoplasm. The catalysed reaction is a ribonucleoside 5'-phosphate + H2O = a ribonucleoside + phosphate. The enzyme catalyses a ribonucleoside 3'-phosphate + H2O = a ribonucleoside + phosphate. It catalyses the reaction [phosphate](n) + H2O = [phosphate](n-1) + phosphate + H(+). Its function is as follows. Nucleotidase with a broad substrate specificity as it can dephosphorylate various ribo- and deoxyribonucleoside 5'-monophosphates and ribonucleoside 3'-monophosphates with highest affinity to 3'-AMP. Also hydrolyzes polyphosphate (exopolyphosphatase activity) with the preference for short-chain-length substrates (P20-25). Might be involved in the regulation of dNTP and NTP pools, and in the turnover of 3'-mononucleotides produced by numerous intracellular RNases (T1, T2, and F) during the degradation of various RNAs. The chain is 5'/3'-nucleotidase SurE from Serratia proteamaculans (strain 568).